A 234-amino-acid chain; its full sequence is Purine nucleoside phosphorylase DeoD-type (234 aa).

Histidine 5 is an a purine D-ribonucleoside binding site. Residues glycine 21, arginine 25, arginine 44, and 88–91 each bind phosphate; that span reads RIGT. A purine D-ribonucleoside is bound by residues 180–182 and 204–205; these read DME and SD. The active-site Proton donor is aspartate 205.

Belongs to the PNP/UDP phosphorylase family. Homohexamer; trimer of homodimers.

The enzyme catalyses a purine D-ribonucleoside + phosphate = a purine nucleobase + alpha-D-ribose 1-phosphate. The catalysed reaction is a purine 2'-deoxy-D-ribonucleoside + phosphate = a purine nucleobase + 2-deoxy-alpha-D-ribose 1-phosphate. Its function is as follows. Catalyzes the reversible phosphorolytic breakdown of the N-glycosidic bond in the beta-(deoxy)ribonucleoside molecules, with the formation of the corresponding free purine bases and pentose-1-phosphate. The protein is Purine nucleoside phosphorylase DeoD-type of Buchnera aphidicola subsp. Acyrthosiphon pisum (strain APS) (Acyrthosiphon pisum symbiotic bacterium).